A 498-amino-acid chain; its full sequence is Probable cytosol aminopeptidase (498 aa).

Mn(2+) is bound by residues lysine 267 and aspartate 272. Residue lysine 279 is part of the active site. 3 residues coordinate Mn(2+): aspartate 290, aspartate 349, and glutamate 351. Residue arginine 353 is part of the active site.

Belongs to the peptidase M17 family. The cofactor is Mn(2+).

It localises to the cytoplasm. The catalysed reaction is Release of an N-terminal amino acid, Xaa-|-Yaa-, in which Xaa is preferably Leu, but may be other amino acids including Pro although not Arg or Lys, and Yaa may be Pro. Amino acid amides and methyl esters are also readily hydrolyzed, but rates on arylamides are exceedingly low.. It catalyses the reaction Release of an N-terminal amino acid, preferentially leucine, but not glutamic or aspartic acids.. In terms of biological role, presumably involved in the processing and regular turnover of intracellular proteins. Catalyzes the removal of unsubstituted N-terminal amino acids from various peptides. In Dechloromonas aromatica (strain RCB), this protein is Probable cytosol aminopeptidase.